The chain runs to 653 residues: 4-alpha-glucanotransferase (653 aa).

The active-site Nucleophile is Glu-123. The active-site Proton donor is the Asp-214.

This sequence belongs to the glycosyl hydrolase 57 family.

It carries out the reaction Transfers a segment of a (1-&gt;4)-alpha-D-glucan to a new position in an acceptor, which may be glucose or a (1-&gt;4)-alpha-D-glucan.. This is 4-alpha-glucanotransferase from Thermococcus kodakarensis (strain ATCC BAA-918 / JCM 12380 / KOD1) (Pyrococcus kodakaraensis (strain KOD1)).